Reading from the N-terminus, the 351-residue chain is Nicotinate-nucleotide--dimethylbenzimidazole phosphoribosyltransferase (351 aa).

The active-site Proton acceptor is E317.

It belongs to the CobT family.

It catalyses the reaction 5,6-dimethylbenzimidazole + nicotinate beta-D-ribonucleotide = alpha-ribazole 5'-phosphate + nicotinate + H(+). It functions in the pathway nucleoside biosynthesis; alpha-ribazole biosynthesis; alpha-ribazole from 5,6-dimethylbenzimidazole: step 1/2. In terms of biological role, catalyzes the synthesis of alpha-ribazole-5'-phosphate from nicotinate mononucleotide (NAMN) and 5,6-dimethylbenzimidazole (DMB). This is Nicotinate-nucleotide--dimethylbenzimidazole phosphoribosyltransferase from Pseudomonas putida (strain ATCC 47054 / DSM 6125 / CFBP 8728 / NCIMB 11950 / KT2440).